The following is a 705-amino-acid chain: Double-strand break repair protein MRE11 (705 aa).

The Mn(2+) site is built by aspartate 15, histidine 17, aspartate 55, and asparagine 122. Histidine 123 functions as the Proton donor in the catalytic mechanism. Histidine 220, histidine 248, and histidine 250 together coordinate Mn(2+). Basic and acidic residues predominate over residues 505–514; it reads RSLRSKEDSR. A disordered region spans residues 505 to 705; sequence RSLRSKEDSR…TRNYGAVRRR (201 aa). 2 stretches are compositionally biased toward polar residues: residues 515 to 538 and 589 to 605; these read FTSS…LNSF and SMKQ…SSAA. Basic residues predominate over residues 641–663; the sequence is GRKRAAPRGGRGRGRGATAKRGR.

This sequence belongs to the MRE11/RAD32 family. In terms of assembly, component of the MRN complex composed of two heterodimers RAD50/MRE11 associated with a single NBS1. Mn(2+) serves as cofactor.

Its subcellular location is the nucleus. It is found in the chromosome. Core component of the MRN complex, which plays a central role in double-strand break (DSB) repair, DNA recombination, maintenance of telomere integrity and meiosis. The MRN complex is involved in the repair of DNA double-strand breaks (DSBs) via homologous recombination (HR), an error-free mechanism which primarily occurs during S and G2 phases. The complex (1) mediates the end resection of damaged DNA, which generates proper single-stranded DNA, a key initial steps in HR, and is (2) required for the recruitment of other repair factors and efficient activation of ATM and ATR upon DNA damage. Within the MRN complex, MRE11 possesses both single-strand endonuclease activity and double-strand-specific 3'-5' exonuclease activity. MRE11 first endonucleolytically cleaves the 5' strand at DNA DSB ends to prevent non-homologous end joining (NHEJ) and licence HR. It then generates a single-stranded DNA gap via 3' to 5' exonucleolytic degradation, which is required for single-strand invasion and recombination. This is Double-strand break repair protein MRE11 from Oryza sativa subsp. indica (Rice).